A 160-amino-acid chain; its full sequence is UPF0178 protein PSPA7_5991 (160 aa).

This sequence belongs to the UPF0178 family.

This chain is UPF0178 protein PSPA7_5991, found in Pseudomonas paraeruginosa (strain DSM 24068 / PA7) (Pseudomonas aeruginosa (strain PA7)).